The primary structure comprises 865 residues: Alanine--tRNA ligase (865 aa).

Histidine 554, histidine 558, cysteine 656, and histidine 660 together coordinate Zn(2+).

This sequence belongs to the class-II aminoacyl-tRNA synthetase family. Zn(2+) is required as a cofactor.

The protein resides in the cytoplasm. It catalyses the reaction tRNA(Ala) + L-alanine + ATP = L-alanyl-tRNA(Ala) + AMP + diphosphate. Functionally, catalyzes the attachment of alanine to tRNA(Ala) in a two-step reaction: alanine is first activated by ATP to form Ala-AMP and then transferred to the acceptor end of tRNA(Ala). Also edits incorrectly charged Ser-tRNA(Ala) and Gly-tRNA(Ala) via its editing domain. The protein is Alanine--tRNA ligase of Francisella tularensis subsp. novicida (strain U112).